The sequence spans 123 residues: Acidic phospholipase A2 (123 aa).

7 disulfides stabilise this stretch: cysteine 26/cysteine 116, cysteine 28/cysteine 44, cysteine 43/cysteine 95, cysteine 49/cysteine 123, cysteine 50/cysteine 88, cysteine 57/cysteine 81, and cysteine 75/cysteine 86. Residues tyrosine 27, glycine 29, and glycine 31 each coordinate Ca(2+). The active site involves histidine 47. Residue aspartate 48 participates in Ca(2+) binding. Residue aspartate 89 is part of the active site.

Belongs to the phospholipase A2 family. Group II subfamily. D49 sub-subfamily. As to quaternary structure, homodimer. It depends on Ca(2+) as a cofactor. As to expression, expressed by the venom gland.

The protein resides in the secreted. The enzyme catalyses a 1,2-diacyl-sn-glycero-3-phosphocholine + H2O = a 1-acyl-sn-glycero-3-phosphocholine + a fatty acid + H(+). Functionally, snake venom phospholipase A2 (PLA2) that inhibits ADP-induced platelet aggregation. PLA2 catalyzes the calcium-dependent hydrolysis of the 2-acyl groups in 3-sn-phosphoglycerides. This chain is Acidic phospholipase A2, found in Deinagkistrodon acutus (Hundred-pace snake).